The primary structure comprises 56 residues: UPF0391 membrane protein PSHAa0537 (56 aa).

Transmembrane regions (helical) follow at residues 6-26 and 27-47; these read ITFL…IAGA and AAGI…ISLV.

The protein belongs to the UPF0391 family.

It localises to the cell membrane. The chain is UPF0391 membrane protein PSHAa0537 from Pseudoalteromonas translucida (strain TAC 125).